Reading from the N-terminus, the 1310-residue chain is Vacuolating cytotoxin autotransporter (1310 aa).

An N-terminal signal peptide occupies residues 1–30 (MEIQQTHRKINRPIISLALVGVLMGTELGA). The disordered stretch occupies residues 339 to 364 (PEGGYESKTKDNPQNNPKNDAQKTEI). A compositionally biased stretch (polar residues) spans 350-364 (NPQNNPKNDAQKTEI). Residues 1038 to 1310 (KYEKPTNVWA…ASNLGMRYSF (273 aa)) enclose the Autotransporter domain.

The protein localises to the periplasm. Its subcellular location is the secreted. The protein resides in the cell surface. It localises to the cell outer membrane. Functionally, induces vacuolation of eukaryotic cells. Causes ulceration and gastric lesions. This Helicobacter pylori (Campylobacter pylori) protein is Vacuolating cytotoxin autotransporter (vacA).